The sequence spans 260 residues: ProSAAS (260 aa).

Positions 1 to 33 (MAGSPLLWGPRAGGVGLLVLLLLGLFRPPPALC) are cleaved as a signal peptide. Residues 34–215 (ARPVKEPRGL…SADSEGVAAP (182 aa)) are proSAAS(1-180). An O-linked (GalNAc...) threonine glycan is attached at threonine 53. Residues 165–188 (RPRPPVYDDGPAGPDAEEAGDETP) are disordered. Acidic residues predominate over residues 179 to 188 (DAEEAGDETP). The interval 221–260 (AADHDVGSELPPEGVLGALLRVKRLETPAPQVPARRLLPP) is C-terminal inhibitory domain; interacts with PCSK1. A glycan (O-linked (GalNAc...) serine) is linked at serine 228. A Sufficient for inhibition of PCSK1 motif is present at residues 239 to 244 (LLRVKR). Threonine 247 is a glycosylation site (O-linked (GalNAc...) threonine).

As to quaternary structure, interacts via the C-terminal inhibitory domain with PCSK1 66 kDa form. Post-translationally, proteolytically cleaved in the Golgi. O-glycosylated with a core 1 or possibly core 8 glycan. As to expression, expressed in brain and pancreas.

Its subcellular location is the secreted. The protein localises to the golgi apparatus. The protein resides in the trans-Golgi network. Its function is as follows. May function in the control of the neuroendocrine secretory pathway. Proposed be a specific endogenous inhibitor of PCSK1. ProSAAS and Big PEN-LEN, both containing the C-terminal inhibitory domain, but not the further processed peptides reduce PCSK1 activity in the endoplasmic reticulum and Golgi. It reduces the activity of the 84 kDa form but not the autocatalytically derived 66 kDa form of PCSK1. Subsequent processing of proSAAS may eliminate the inhibition. Slows down convertase-mediated processing of proopiomelanocortin and proenkephalin. May control the intracellular timing of PCSK1 rather than its total level of activity. In terms of biological role, endogenous ligand for GPR171. Neuropeptide involved in the regulation of feeding. The sequence is that of ProSAAS (PCSK1N) from Homo sapiens (Human).